We begin with the raw amino-acid sequence, 299 residues long: MKNTASTTAAAGWRDYYELCKPRVVALMMLTAVVGMLLASDQGMPWNALILGNLGIALLASSAAAINHIVDQKIDAVMARTQKRPIVQGRVDNVHALTFAFSLAVVGMAILAWGVNPLTAWLTLASLIGYAVVYTLFLKRATPQNIVLGGLAGAAPPLLGWTSVTGTVDPHALLLVLIIFAWTPPHFWALAVHRKDEYAKAGVPMLPVTHGDRYTKLHILLYTLMLFAASMLPFITGMCGWIYFVAALALGVRFLDWAWAMWRDSRKHAAIKTFRYSITYLMLLFVALLADHYIPVTLS.

A run of 8 helical transmembrane segments spans residues 24–44 (VVAL…DQGM), 46–66 (WNAL…AAAI), 94–114 (VHAL…LAWG), 118–138 (LTAW…TLFL), 146–166 (IVLG…SVTG), 172–192 (ALLL…ALAV), 232–252 (LPFI…ALGV), and 278–298 (ITYL…PVTL).

It belongs to the UbiA prenyltransferase family. Protoheme IX farnesyltransferase subfamily.

Its subcellular location is the cell inner membrane. It carries out the reaction heme b + (2E,6E)-farnesyl diphosphate + H2O = Fe(II)-heme o + diphosphate. Its pathway is porphyrin-containing compound metabolism; heme O biosynthesis; heme O from protoheme: step 1/1. Functionally, converts heme B (protoheme IX) to heme O by substitution of the vinyl group on carbon 2 of heme B porphyrin ring with a hydroxyethyl farnesyl side group. This is Protoheme IX farnesyltransferase from Hahella chejuensis (strain KCTC 2396).